The chain runs to 373 residues: MEDNNMLPQFIHGILSTSHSLFTRSIQELDEGATTPYDYDDGEPCHKTSVKQIGAWILPPLYSLVFIFGFVGNMLVIIILIGCKKLKSMTDIYLLNLAISDLLFLLTLPFWAHYAANEWVFGNIMCKVFTGLYHIGYFGGIFFIILLTIDRYLAIVHAVFALKARTVTFGVITSVVTWVVAVFASLPGIIFTKSKQDDHHYTCGPYFTQLWKNFQTIMRNILSLILPLLVMVICYSGILHTLFRCRNEKKRHRAVRLIFAIMIVYFLFWTPYNIVLFLTTFQESLGMSNCVIDKHLDQAMQVTETLGMTHCCINPVIYAFVGEKFRRYLSIFFRKHIAKRLCKQCPVFYRETADRVSSTFTPSTGEQEVSVGL.

The Extracellular portion of the chain corresponds to 1 to 55 (MEDNNMLPQFIHGILSTSHSLFTRSIQELDEGATTPYDYDDGEPCHKTSVKQIGA). The chain crosses the membrane as a helical span at residues 56 to 83 (WILPPLYSLVFIFGFVGNMLVIIILIGC). Residues 84-93 (KKLKSMTDIY) lie on the Cytoplasmic side of the membrane. The chain crosses the membrane as a helical span at residues 94-114 (LLNLAISDLLFLLTLPFWAHY). Residues 115 to 127 (AANEWVFGNIMCK) are Extracellular-facing. Cys-126 and Cys-203 are joined by a disulfide. The helical transmembrane segment at 128–149 (VFTGLYHIGYFGGIFFIILLTI) threads the bilayer. Residues 150 to 166 (DRYLAIVHAVFALKART) lie on the Cytoplasmic side of the membrane. Residue Tyr-152 is modified to Phosphotyrosine; by JAK2. Residues 167-191 (VTFGVITSVVTWVVAVFASLPGIIF) form a helical membrane-spanning segment. Residues 192-219 (TKSKQDDHHYTCGPYFTQLWKNFQTIMR) are Extracellular-facing. A helical membrane pass occupies residues 220–239 (NILSLILPLLVMVICYSGIL). Over 240–256 (HTLFRCRNEKKRHRAVR) the chain is Cytoplasmic. Residues 257–281 (LIFAIMIVYFLFWTPYNIVLFLTTF) traverse the membrane as a helical segment. Residues 282 to 298 (QESLGMSNCVIDKHLDQ) lie on the Extracellular side of the membrane. The chain crosses the membrane as a helical span at residues 299-322 (AMQVTETLGMTHCCINPVIYAFVG). The Cytoplasmic portion of the chain corresponds to 323 to 373 (EKFRRYLSIFFRKHIAKRLCKQCPVFYRETADRVSSTFTPSTGEQEVSVGL).

The protein belongs to the G-protein coupled receptor 1 family. In terms of assembly, interacts with ARRB1. Interacts (via extracellular N-terminal region) with beta-defensin DEFB106A/DEFB106B; this interaction may preferentially require specific tyrosine sulfation on CCR2. Interacts with NUP85; the interaction is required for CCR2 clusters formation on the cell membrane and CCR2 signaling. N-glycosylated. Post-translationally, sulfation increases the affinity for both monomeric and dimeric CCL2 with stronger binding to the monomeric form. Binding of sulfated CCR2 to CCL2 promotes conversion of CCL2 from dimer to monomer. Epressed in mature thymocytes. Detected in monocyte/macrophage cell lines, but not in nonhematopoietic cell lines.

Its subcellular location is the cell membrane. Key functional receptor for CCL2 but can also bind CCL7 and CCL12 chemokines. Its binding with CCL2 on monocytes and macrophages mediates chemotaxis and migration induction through the activation of the PI3K cascade, the small G protein Rac and lamellipodium protrusion. Also acts as a receptor for the beta-defensin DEFB106A/DEFB106B. Regulates the expression of T-cell inflammatory cytokines and T-cell differentiation, promoting the differentiation of T-cells into T-helper 17 cells (Th17) during inflammation. Facilitates the export of mature thymocytes by enhancing directional movement of thymocytes to sphingosine-1-phosphate stimulation and up-regulation of S1P1R expression; signals through the JAK-STAT pathway to regulate FOXO1 activity leading to an increased expression of S1P1R. Plays an important role in mediating peripheral nerve injury-induced neuropathic pain. Increases NMDA-mediated synaptic transmission in both dopamine D1 and D2 receptor-containing neurons, which may be caused by MAPK/ERK-dependent phosphorylation of GRIN2B/NMDAR2B. Mediates the recruitment of macrophages and monocytes to the injury site following brain injury. The chain is C-C chemokine receptor type 2 (Ccr2) from Mus musculus (Mouse).